Here is a 179-residue protein sequence, read N- to C-terminus: Large ribosomal subunit protein uL5 (179 aa).

It belongs to the universal ribosomal protein uL5 family. As to quaternary structure, part of the 50S ribosomal subunit; part of the 5S rRNA/L5/L18/L25 subcomplex. Contacts the 5S rRNA and the P site tRNA. Forms a bridge to the 30S subunit in the 70S ribosome.

Its function is as follows. This is one of the proteins that bind and probably mediate the attachment of the 5S RNA into the large ribosomal subunit, where it forms part of the central protuberance. In the 70S ribosome it contacts protein S13 of the 30S subunit (bridge B1b), connecting the 2 subunits; this bridge is implicated in subunit movement. Contacts the P site tRNA; the 5S rRNA and some of its associated proteins might help stabilize positioning of ribosome-bound tRNAs. This is Large ribosomal subunit protein uL5 from Cellvibrio japonicus (strain Ueda107) (Pseudomonas fluorescens subsp. cellulosa).